Here is a 336-residue protein sequence, read N- to C-terminus: Isethionate-binding periplasmic protein DctP (336 aa).

The N-terminal stretch at 1–23 (MKHLLKAGALVALACIVTLTAGA) is a signal peptide.

The protein belongs to the bacterial solute-binding protein 7 family. The complex comprises the periplasmic solute receptor protein DctP, and the fused transmembrane protein DctMQ.

It is found in the periplasm. It carries out the reaction 2-hydroxyethane-1-sulfonate(out) + Na(+)(out) = 2-hydroxyethane-1-sulfonate(in) + Na(+)(in). It functions in the pathway organosulfur degradation; alkanesulfonate degradation. Part of the tripartite ATP-independent periplasmic (TRAP) transport system DctPQM involved in the uptake of isethionate (2-hydroxyethanesulfonate), which is then catabolized by enzymes encoded by adjacent genes in the locus. The DctP subunit is the solute-binding protein. Thereby is involved in an anaerobic respiration pathway that converts the sulfonate isethionate to ammonia, acetate and sulfide. This is Isethionate-binding periplasmic protein DctP from Oleidesulfovibrio alaskensis (strain ATCC BAA-1058 / DSM 17464 / G20) (Desulfovibrio alaskensis).